The following is a 259-amino-acid chain: GTP cyclohydrolase FolE2 (259 aa).

This sequence belongs to the GTP cyclohydrolase IV family.

The catalysed reaction is GTP + H2O = 7,8-dihydroneopterin 3'-triphosphate + formate + H(+). It participates in cofactor biosynthesis; 7,8-dihydroneopterin triphosphate biosynthesis; 7,8-dihydroneopterin triphosphate from GTP: step 1/1. Converts GTP to 7,8-dihydroneopterin triphosphate. The chain is GTP cyclohydrolase FolE2 from Nitratidesulfovibrio vulgaris (strain DSM 19637 / Miyazaki F) (Desulfovibrio vulgaris).